We begin with the raw amino-acid sequence, 514 residues long: ATP synthase subunit alpha (514 aa).

Gly170–Thr177 provides a ligand contact to ATP.

Belongs to the ATPase alpha/beta chains family. In terms of assembly, F-type ATPases have 2 components, CF(1) - the catalytic core - and CF(0) - the membrane proton channel. CF(1) has five subunits: alpha(3), beta(3), gamma(1), delta(1), epsilon(1). CF(0) has three main subunits: a(1), b(2) and c(9-12). The alpha and beta chains form an alternating ring which encloses part of the gamma chain. CF(1) is attached to CF(0) by a central stalk formed by the gamma and epsilon chains, while a peripheral stalk is formed by the delta and b chains.

It localises to the cell inner membrane. The enzyme catalyses ATP + H2O + 4 H(+)(in) = ADP + phosphate + 5 H(+)(out). Its function is as follows. Produces ATP from ADP in the presence of a proton gradient across the membrane. The alpha chain is a regulatory subunit. This is ATP synthase subunit alpha from Alcanivorax borkumensis (strain ATCC 700651 / DSM 11573 / NCIMB 13689 / SK2).